We begin with the raw amino-acid sequence, 431 residues long: Serine--tRNA ligase (431 aa).

236–238 provides a ligand contact to L-serine; that stretch reads TAE. Position 267-269 (267-269) interacts with ATP; the sequence is RSE. Residue E290 coordinates L-serine. 354 to 357 serves as a coordination point for ATP; the sequence is EISS. L-serine is bound at residue S389.

It belongs to the class-II aminoacyl-tRNA synthetase family. Type-1 seryl-tRNA synthetase subfamily. As to quaternary structure, homodimer. The tRNA molecule binds across the dimer.

The protein resides in the cytoplasm. It carries out the reaction tRNA(Ser) + L-serine + ATP = L-seryl-tRNA(Ser) + AMP + diphosphate + H(+). The catalysed reaction is tRNA(Sec) + L-serine + ATP = L-seryl-tRNA(Sec) + AMP + diphosphate + H(+). Its pathway is aminoacyl-tRNA biosynthesis; selenocysteinyl-tRNA(Sec) biosynthesis; L-seryl-tRNA(Sec) from L-serine and tRNA(Sec): step 1/1. Functionally, catalyzes the attachment of serine to tRNA(Ser). Is also able to aminoacylate tRNA(Sec) with serine, to form the misacylated tRNA L-seryl-tRNA(Sec), which will be further converted into selenocysteinyl-tRNA(Sec). The chain is Serine--tRNA ligase from Janthinobacterium sp. (strain Marseille) (Minibacterium massiliensis).